The chain runs to 683 residues: Protein kinase C eta type (683 aa).

The C2 domain occupies 1–118; it reads MSSGTMKFNG…LRTAGTSDTF (118 aa). A phosphoserine mark is found at serine 28 and serine 32. 2 Phorbol-ester/DAG-type zinc fingers span residues 171–222 and 245–295; these read GHKF…VTAC and PHKF…APNC. Serine 317 is modified (phosphoserine). Positions 355-614 constitute a Protein kinase domain; that stretch reads FEFIRVLGKG…EHEILRHPFF (260 aa). Residues 361–369 and lysine 384 each bind ATP; that span reads LGKGSFGKV. Aspartate 479 (proton acceptor) is an active-site residue. Residue threonine 513 is modified to Phosphothreonine; by PDPK1. The AGC-kinase C-terminal domain occupies 615–683; the sequence is KEIDWAQLNH…FSYVSPELQL (69 aa). Residue threonine 656 is modified to Phosphothreonine. Serine 675 bears the Phosphoserine mark.

It belongs to the protein kinase superfamily. AGC Ser/Thr protein kinase family. PKC subfamily. In terms of assembly, interacts with FYN. Interacts with RALA. Interacts with DGKQ. In terms of tissue distribution, predominantly expressed in lung and skin.

Its subcellular location is the cytoplasm. The enzyme catalyses L-seryl-[protein] + ATP = O-phospho-L-seryl-[protein] + ADP + H(+). The catalysed reaction is L-threonyl-[protein] + ATP = O-phospho-L-threonyl-[protein] + ADP + H(+). Novel PKCs (PRKCD, PRKCE, PRKCH and PRKCQ) are calcium-insensitive, but activated by diacylglycerol (DAG) and phosphatidylserine. Three specific sites; Thr-513 (activation loop of the kinase domain), Thr-656 (turn motif) and Ser-675 (hydrophobic region), need to be phosphorylated for its full activation. Its function is as follows. Calcium-independent, phospholipid- and diacylglycerol (DAG)-dependent serine/threonine-protein kinase that is involved in the regulation of cell differentiation in keratinocytes and pre-B cell receptor, mediates regulation of epithelial tight junction integrity and foam cell formation, and is required for glioblastoma proliferation and apoptosis prevention in MCF-7 cells. In keratinocytes, binds and activates the tyrosine kinase FYN, which in turn blocks epidermal growth factor receptor (EGFR) signaling and leads to keratinocyte growth arrest and differentiation. Associates with the cyclin CCNE1-CDK2-CDKN1B complex and inhibits CDK2 kinase activity, leading to RB1 dephosphorylation and thereby G1 arrest in keratinocytes. In association with RALA activates actin depolymerization, which is necessary for keratinocyte differentiation. In the pre-B cell receptor signaling, functions downstream of BLNK by up-regulating IRF4, which in turn activates L chain gene rearrangement. Regulates epithelial tight junctions (TJs) by phosphorylating occludin (OCLN) on threonine residues, which is necessary for the assembly and maintenance of TJs. In association with PLD2 and via TLR4 signaling, is involved in lipopolysaccharide (LPS)-induced RGS2 down-regulation and foam cell formation. Upon PMA stimulation, mediates glioblastoma cell proliferation by activating the mTOR pathway, the PI3K/AKT pathway and the ERK1-dependent phosphorylation of ELK1. Involved in the protection of glioblastoma cells from irradiation-induced apoptosis by preventing caspase-9 activation. In camptothecin-treated MCF-7 cells, regulates NF-kappa-B upstream signaling by activating IKBKB, and confers protection against DNA damage-induced apoptosis. Promotes oncogenic functions of ATF2 in the nucleus while blocking its apoptotic function at mitochondria. Phosphorylates ATF2 which promotes its nuclear retention and transcriptional activity and negatively regulates its mitochondrial localization. This chain is Protein kinase C eta type (Prkch), found in Mus musculus (Mouse).